A 413-amino-acid chain; its full sequence is Protein MANNAN SYNTHESIS-RELATED (413 aa).

Topologically, residues 1 to 5 are cytoplasmic; that stretch reads MNSME. Residues 6 to 26 traverse the membrane as a helical; Signal-anchor for type II membrane protein segment; the sequence is IRQAFAGLLTLSMFIMLGNMI. Residues 27-413 lie on the Lumenal side of the membrane; the sequence is KKDHFDYPAE…KNHLAYKCFC (387 aa). Asn207 carries an N-linked (GlcNAc...) asparagine glycan. 255–257 contributes to the substrate binding site; it reads DLR.

It belongs to the glycosyltransferase GT106 family. As to expression, highly and specifically expressed in the endosperm.

It is found in the golgi apparatus membrane. It participates in glycan biosynthesis. Glycosyltransferase involved in mannan biosynthesis. This Trigonella foenum-graecum (Fenugreek) protein is Protein MANNAN SYNTHESIS-RELATED.